The chain runs to 310 residues: Dermonecrotic toxin LiSicTox-alphaII2 (310 aa).

The signal sequence occupies residues 1 to 18 (MLLRIALILGCWSILSEG). The propeptide occupies 19–26 (AENDIAER). Residue His38 is part of the active site. Mg(2+) contacts are provided by Glu58 and Asp60. The active-site Nucleophile is His74. Cystine bridges form between Cys78/Cys84 and Cys80/Cys224. Asn99 is a glycosylation site (N-linked (GlcNAc...) asparagine). Asp118 is a Mg(2+) binding site.

It belongs to the arthropod phospholipase D family. Class II subfamily. It depends on Mg(2+) as a cofactor. In terms of tissue distribution, expressed by the venom gland.

The protein localises to the secreted. It catalyses the reaction an N-(acyl)-sphingosylphosphocholine = an N-(acyl)-sphingosyl-1,3-cyclic phosphate + choline. It carries out the reaction an N-(acyl)-sphingosylphosphoethanolamine = an N-(acyl)-sphingosyl-1,3-cyclic phosphate + ethanolamine. The enzyme catalyses a 1-acyl-sn-glycero-3-phosphocholine = a 1-acyl-sn-glycero-2,3-cyclic phosphate + choline. The catalysed reaction is a 1-acyl-sn-glycero-3-phosphoethanolamine = a 1-acyl-sn-glycero-2,3-cyclic phosphate + ethanolamine. Functionally, dermonecrotic toxins cleave the phosphodiester linkage between the phosphate and headgroup of certain phospholipids (sphingolipid and lysolipid substrates), forming an alcohol (often choline) and a cyclic phosphate. This toxin acts on sphingomyelin (SM). It may also act on ceramide phosphoethanolamine (CPE), lysophosphatidylcholine (LPC) and lysophosphatidylethanolamine (LPE), but not on lysophosphatidylserine (LPS), and lysophosphatidylglycerol (LPG). It acts by transphosphatidylation, releasing exclusively cyclic phosphate products as second products. Induces dermonecrosis, hemolysis, increased vascular permeability, edema, inflammatory response, and platelet aggregation. This is Dermonecrotic toxin LiSicTox-alphaII2 from Loxosceles intermedia (Brown spider).